The chain runs to 475 residues: Ribulose bisphosphate carboxylase large chain (475 aa).

Positions 1–2 are excised as a propeptide; sequence MS. Pro3 carries the N-acetylproline modification. Lys14 carries the N6,N6,N6-trimethyllysine modification. Positions 123 and 173 each coordinate substrate. Lys175 (proton acceptor) is an active-site residue. Residue Lys177 coordinates substrate. Lys201, Asp203, and Glu204 together coordinate Mg(2+). Residue Lys201 is modified to N6-carboxylysine. The active-site Proton acceptor is His294. Substrate contacts are provided by Arg295, His327, and Ser379.

Belongs to the RuBisCO large chain family. Type I subfamily. Heterohexadecamer of 8 large chains and 8 small chains. Mg(2+) serves as cofactor.

It is found in the plastid. The protein localises to the chloroplast. It carries out the reaction 2 (2R)-3-phosphoglycerate + 2 H(+) = D-ribulose 1,5-bisphosphate + CO2 + H2O. The enzyme catalyses D-ribulose 1,5-bisphosphate + O2 = 2-phosphoglycolate + (2R)-3-phosphoglycerate + 2 H(+). In terms of biological role, ruBisCO catalyzes two reactions: the carboxylation of D-ribulose 1,5-bisphosphate, the primary event in carbon dioxide fixation, as well as the oxidative fragmentation of the pentose substrate in the photorespiration process. Both reactions occur simultaneously and in competition at the same active site. The sequence is that of Ribulose bisphosphate carboxylase large chain from Huperzia lucidula (Shining clubmoss).